We begin with the raw amino-acid sequence, 341 residues long: D-aspartate oxidase (341 aa).

The FAD site is built by Asp-36, Lys-37, Thr-43, Ser-44, Met-50, Gly-307, Ile-311, and Ser-312. The Microbody targeting signal signature appears at 339–341 (SNL).

This sequence belongs to the DAMOX/DASOX family. In terms of assembly, monomer. Interacts with PEX5; the interaction is direct and required for localization of DDO to the peroxisome. Interacts with DAOA; the interaction is direct and increases the degradation rate of DDO. The cofactor is FAD. In terms of processing, may be S-nitrosylated. As to expression, expressed in epithelial cells of the proximal nephron tubules in the renal cortex (at protein level). In the brain, expressed in the frontal, temporal, and occipital lobes of the cortex, hippocampus, striatum, diencephalon, brainstem, cerebellum, spinal cord, plexus choroiderus and ependyma (at protein level). Expression is increased in the prefrontal cortex of schizophrenic patients. Levels are normal in the superior frontal gyrus of patients with Alzheimer's disease.

It localises to the peroxisome matrix. The protein resides in the cytoplasm. It is found in the cytosol. It carries out the reaction D-aspartate + O2 + H2O = oxaloacetate + H2O2 + NH4(+). It catalyses the reaction D-glutamate + O2 + H2O = H2O2 + 2-oxoglutarate + NH4(+). Its activity is regulated as follows. Inhibited by the benzodiazepine olanzapine. Inhibited by aminooxyacetic acid, thiolactomycin, malonate and meso-tartrate. Clozapine, haloperidol and chlorpromazine have no effect on activity. Not inhibited by sodium, potassium, magnesium, iron, calcium, cobalt, copper, nickel, manganese or zinc ions. Not inhibited by AMP, ADP, ATP, or cAMP. Not inhibited by pyridoxal 5'-phosphate. Selectively catalyzes the oxidative deamination of acidic amino acids. Suppresses the level of D-aspartate in the brain, an amino acid that can act as an agonist for glutamate receptors. Protects the organism from the toxicity of D-amino acids. May also function in the intestine. This is D-aspartate oxidase (DDO) from Homo sapiens (Human).